A 357-amino-acid polypeptide reads, in one-letter code: MSLFEVRHDWKKAEIEALFALPMNDLLFKAHTIHRESFDPNEVQISRLLSIKTGACPEDCKYCPQSARYDTGLEKERLLEIEKVLTEAKSAKAAGASRFCMGAAWRNPRDRDMPYLTQMVKDVKALGLETCMTLGMLSTEQSQKLAGAGLDYYNHNLDTSPEYYGDVITTRTYQSRLDTLSNVRASGMKVCSGGIVGMGEKASDRAGLLQQLANLEQHPDSVPINMLVKVAGTPFEKIDDLDPLEFVRTIAVARIIMPKSRVRLSAGREKMSDELQSMCFFAGANSIFYGCKLLTTANPEENDDMSLFKRLGLRPEQGPAAPVAQVATNLDQEQALIAKASALNEKATQQFYDAGAL.

The Radical SAM core domain maps to 41-268 (NEVQISRLLS…KSRVRLSAGR (228 aa)). [4Fe-4S] cluster is bound by residues Cys-56, Cys-60, and Cys-63. Residues Cys-100, Cys-131, Cys-191, and Arg-263 each contribute to the [2Fe-2S] cluster site.

It belongs to the radical SAM superfamily. Biotin synthase family. Homodimer. It depends on [4Fe-4S] cluster as a cofactor. [2Fe-2S] cluster is required as a cofactor.

The catalysed reaction is (4R,5S)-dethiobiotin + (sulfur carrier)-SH + 2 reduced [2Fe-2S]-[ferredoxin] + 2 S-adenosyl-L-methionine = (sulfur carrier)-H + biotin + 2 5'-deoxyadenosine + 2 L-methionine + 2 oxidized [2Fe-2S]-[ferredoxin]. Its pathway is cofactor biosynthesis; biotin biosynthesis; biotin from 7,8-diaminononanoate: step 2/2. In terms of biological role, catalyzes the conversion of dethiobiotin (DTB) to biotin by the insertion of a sulfur atom into dethiobiotin via a radical-based mechanism. The protein is Biotin synthase of Shewanella denitrificans (strain OS217 / ATCC BAA-1090 / DSM 15013).